Here is a 248-residue protein sequence, read N- to C-terminus: Putative glutamine amidotransferase-like protein C13C5.04 (248 aa).

The Glutamine amidotransferase type-1 domain occupies proline 13–phenylalanine 217.

The protein is Putative glutamine amidotransferase-like protein C13C5.04 of Schizosaccharomyces pombe (strain 972 / ATCC 24843) (Fission yeast).